Reading from the N-terminus, the 189-residue chain is Protein Flattop (189 aa).

Residues 112–189 (EISGKPFDPD…PPPSPCKSTK (78 aa)) are disordered. Positions 137 to 148 (APNPTIIPSSPV) are enriched in polar residues. A compositionally biased stretch (pro residues) spans 178–189 (NNPPPSPCKSTK).

Belongs to the Flattop family. Microtubule inner protein component of sperm flagellar doublet microtubules. Interacts with DLG3. In terms of tissue distribution, expressed in mono- and multiciliated tissues during planar cell polarity acquisition.

Its subcellular location is the cytoplasm. The protein resides in the cytoskeleton. It localises to the cilium basal body. It is found in the cilium axoneme. The protein localises to the flagellum axoneme. Its subcellular location is the apical cell membrane. Microtubule inner protein (MIP) part of the dynein-decorated doublet microtubules (DMTs) in cilia axoneme. Acts as a regulator of cilium basal body docking and positioning in mono- and multiciliated cells. Regulates basal body docking and cilia formation in multiciliated lung cells. Regulates kinocilium positioning and stereocilia bundle morphogenesis in the inner ear. In Mus musculus (Mouse), this protein is Protein Flattop.